We begin with the raw amino-acid sequence, 270 residues long: LIM zinc-binding domain-containing Nebulette (270 aa).

The region spanning 3 to 63 is the LIM zinc-binding domain; it reads PQCARCGKVV…NAHYPKQSFT (61 aa). One copy of the Nebulin 1 repeat lies at 61–95; it reads SFTTVADTPENLRLKQQSELQSQVKYKRDFEESKG. Arginine 96 is modified (omega-N-methylarginine). A Nebulin 2 repeat occupies 97–131; it reads GFSIVTDTPELQRLKRTQEQISNVKYHEDFEKTKG. Arginine 132 bears the Omega-N-methylarginine mark. The Nebulin 3 repeat unit spans residues 133-159; it reads GFTPVVDDPVTERVRKSTQVVSDAAYK. Threonine 135 is subject to Phosphothreonine. Residues 210-270 enclose the SH3 domain; sequence AHLRTYRAMY…LPANYIEFVN (61 aa). Phosphoserine is present on serine 230.

Its subcellular location is the cytoplasm. Its function is as follows. Binds to actin and plays an important role in the assembly of the Z-disk. Isoform 2 might play a role in the assembly of focal adhesion. The polypeptide is LIM zinc-binding domain-containing Nebulette (Nebl) (Mus musculus (Mouse)).